The chain runs to 554 residues: Arginine--tRNA ligase (554 aa).

The 'HIGH' region motif lies at 132–142 (ANPTGPIHLGG).

The protein belongs to the class-I aminoacyl-tRNA synthetase family. Monomer.

The protein localises to the cytoplasm. The enzyme catalyses tRNA(Arg) + L-arginine + ATP = L-arginyl-tRNA(Arg) + AMP + diphosphate. The polypeptide is Arginine--tRNA ligase (Kineococcus radiotolerans (strain ATCC BAA-149 / DSM 14245 / SRS30216)).